Reading from the N-terminus, the 995-residue chain is DNA polymerase (995 aa).

Belongs to the DNA polymerase type-B family.

It carries out the reaction DNA(n) + a 2'-deoxyribonucleoside 5'-triphosphate = DNA(n+1) + diphosphate. The sequence is that of DNA polymerase (RF1) from Kluyveromyces lactis (strain ATCC 8585 / CBS 2359 / DSM 70799 / NBRC 1267 / NRRL Y-1140 / WM37) (Yeast).